Reading from the N-terminus, the 158-residue chain is MSWITPKKAIMLAAAAEGGTKLNAFDNALLKMGIGNVNLVKLSSVIPAHIEWLDELPKNIPIGMLLPTVYTHIESDEPGSTISAALGIGLSEGNEGGLIYEYSGYCKKEEAEEMVKKMVEEGFRVRGWKLKEIKIVSAEITVKDKPAAAVAAVVMFPY.

Serine 44 carries the pyruvic acid (Ser) modification.

The protein belongs to the PdaD family. Pyruvate serves as cofactor.

It catalyses the reaction L-arginine + H(+) = agmatine + CO2. In Pyrococcus furiosus (strain ATCC 43587 / DSM 3638 / JCM 8422 / Vc1), this protein is Pyruvoyl-dependent arginine decarboxylase.